Reading from the N-terminus, the 76-residue chain is ATP synthase subunit 9, mitochondrial (76 aa).

2 helical membrane-spanning segments follow: residues 10-30 and 52-72; these read IGAG…AIVF and ILGF…SFLL.

It belongs to the ATPase C chain family. In terms of assembly, F-type ATPases have 2 components, CF(1) - the catalytic core - and CF(0) - the membrane proton channel. CF(1) has five subunits: alpha(3), beta(3), gamma(1), delta(1), epsilon(1). CF(0) has three main subunits: a, b and c.

The protein localises to the mitochondrion membrane. Mitochondrial membrane ATP synthase (F(1)F(0) ATP synthase or Complex V) produces ATP from ADP in the presence of a proton gradient across the membrane which is generated by electron transport complexes of the respiratory chain. F-type ATPases consist of two structural domains, F(1) - containing the extramembraneous catalytic core and F(0) - containing the membrane proton channel, linked together by a central stalk and a peripheral stalk. During catalysis, ATP synthesis in the catalytic domain of F(1) is coupled via a rotary mechanism of the central stalk subunits to proton translocation. Part of the complex F(0) domain. A homomeric c-ring of probably 10 subunits is part of the complex rotary element. The polypeptide is ATP synthase subunit 9, mitochondrial (ATP9) (Kluyveromyces lactis (strain ATCC 8585 / CBS 2359 / DSM 70799 / NBRC 1267 / NRRL Y-1140 / WM37) (Yeast)).